Reading from the N-terminus, the 752-residue chain is Peptidyl-prolyl cis-trans isomerase G (752 aa).

One can recognise a PPIase cyclophilin-type domain in the interval 11 to 176 (FFDIAINNQP…AEVRILSCGE (166 aa)). A compositionally biased stretch (basic residues) spans 182–193 (KVKKEEKKRHKS). The segment at 182–752 (KVKKEEKKRH…SPGTDEDKSG (571 aa)) is disordered. Over residues 194–214 (SSSSSSSDSDSSSDSQSSSES) the composition is skewed to low complexity. Residues 226–251 (RKRKKKHRKNSRKHKKEKKKRKKSKK) show a composition bias toward basic residues. Phosphoserine is present on residues Ser-252, Ser-254, Ser-255, Ser-257, and Ser-288. A compositionally biased stretch (basic and acidic residues) spans 290-308 (PKADDKERKNREREREREC). Residue Ser-313 is modified to Phosphoserine. A compositionally biased stretch (basic residues) spans 327–345 (SGRKIKGRGPRRYRTPSRS). Composition is skewed to basic and acidic residues over residues 346 to 366 (RSRD…EMQR) and 377 to 447 (RWIK…DKYN). At Ser-354 the chain carries Phosphoserine. Phosphothreonine is present on Thr-356. Ser-384 bears the Phosphoserine mark. Residue Lys-390 forms a Glycyl lysine isopeptide (Lys-Gly) (interchain with G-Cter in SUMO2) linkage. Phosphoserine occurs at positions 395, 411, and 413. The segment covering 448–461 (KNKVKKRGKSKSRS) has biased composition (basic residues). Composition is skewed to basic and acidic residues over residues 462 to 552 (KSKE…DLTK) and 577 to 598 (RSHD…QEYR). A compositionally biased stretch (basic residues) spans 599 to 625 (RRGRSRSRDRRTPGRSRSKDRRRRRRD). The span at 626–684 (SRSSEREESQSRNKDKYRSQESKSSHRKENSEGEKRTYSKSRDHNSSSNNREKKADREQ) shows a compositional bias: basic and acidic residues. Ser-685 and Ser-688 each carry phosphoserine. The span at 685–705 (SPVSKTKQSSQDNEVKSSTLK) shows a compositional bias: polar residues. Residue Lys-691 forms a Glycyl lysine isopeptide (Lys-Gly) (interchain with G-Cter in SUMO2) linkage. Phosphoserine occurs at positions 694, 742, and 743. A compositionally biased stretch (basic and acidic residues) spans 706 to 752 (NQEDEKTRSPVEKENQKSKGQENDHVHDKNKKCDHESSPGTDEDKSG). The residue at position 746 (Thr-746) is a Phosphothreonine. Position 751 is a phosphoserine (Ser-751).

As to quaternary structure, interacts with CLK1, PNN and with the phosphorylated C-terminal domain of RNA polymerase II.

The protein resides in the nucleus matrix. It localises to the nucleus speckle. The enzyme catalyses [protein]-peptidylproline (omega=180) = [protein]-peptidylproline (omega=0). With respect to regulation, inhibited by cyclosporin A (CsA). PPIase that catalyzes the cis-trans isomerization of proline imidic peptide bonds in oligopeptides and may therefore assist protein folding. May be implicated in the folding, transport, and assembly of proteins. May play an important role in the regulation of pre-mRNA splicing. The polypeptide is Peptidyl-prolyl cis-trans isomerase G (Ppig) (Mus musculus (Mouse)).